A 243-amino-acid polypeptide reads, in one-letter code: Carboxy-S-adenosyl-L-methionine synthase (243 aa).

Residues Tyr-39, 64–66 (GCS), Asn-132, and Arg-199 each bind S-adenosyl-L-methionine.

Belongs to the class I-like SAM-binding methyltransferase superfamily. Cx-SAM synthase family. In terms of assembly, homodimer.

It catalyses the reaction prephenate + S-adenosyl-L-methionine = carboxy-S-adenosyl-L-methionine + 3-phenylpyruvate + H2O. Functionally, catalyzes the conversion of S-adenosyl-L-methionine (SAM) to carboxy-S-adenosyl-L-methionine (Cx-SAM). The chain is Carboxy-S-adenosyl-L-methionine synthase from Alteromonas mediterranea (strain DSM 17117 / CIP 110805 / LMG 28347 / Deep ecotype).